Consider the following 230-residue polypeptide: Large ribosomal subunit protein uL1 (230 aa).

Belongs to the universal ribosomal protein uL1 family. As to quaternary structure, part of the 50S ribosomal subunit.

Binds directly to 23S rRNA. The L1 stalk is quite mobile in the ribosome, and is involved in E site tRNA release. Functionally, protein L1 is also a translational repressor protein, it controls the translation of the L11 operon by binding to its mRNA. In Desulforapulum autotrophicum (strain ATCC 43914 / DSM 3382 / VKM B-1955 / HRM2) (Desulfobacterium autotrophicum), this protein is Large ribosomal subunit protein uL1.